Reading from the N-terminus, the 186-residue chain is UPF0398 protein LBUL_0921 (186 aa).

It belongs to the UPF0398 family.

This chain is UPF0398 protein LBUL_0921, found in Lactobacillus delbrueckii subsp. bulgaricus (strain ATCC BAA-365 / Lb-18).